The following is a 1082-amino-acid chain: Error-prone DNA polymerase (1082 aa).

The protein belongs to the DNA polymerase type-C family. DnaE2 subfamily.

The protein resides in the cytoplasm. It catalyses the reaction DNA(n) + a 2'-deoxyribonucleoside 5'-triphosphate = DNA(n+1) + diphosphate. Its function is as follows. DNA polymerase involved in damage-induced mutagenesis and translesion synthesis (TLS). It is not the major replicative DNA polymerase. This is Error-prone DNA polymerase from Xanthomonas campestris pv. campestris (strain 8004).